Here is a 354-residue protein sequence, read N- to C-terminus: MKETIKNMAAYEAELPVAEVKATYGVSHVARLSANESPYGPSPKVGPAIRDVSDDVLGFYPDGQATALRQAVAKLEQVNPDSLVFGAGADELIELLTRVILTPNDNVIVPNPTFGEYAMHAQIEQATTKSIPVNQDTGHVDFDAMFDAVDEHTTMVWLANPNNPTGVFETRSDILSFLQKLPQSVVLVVDEAYYDFVDQIDATVIRDVKDYPNLVVLRTLSKAYGLANLRIGYGVMQEPLYQVMQAVRLPYNLNTYQITGAVAALSDQLYLQSVVAKVKSEREKFEQFLTKHQFKYYQSQTNFLWIKVGDAKRVGEALLSEGYQINDRLNAEWIRIALGTVSDNEGMQRILLNF.

Lysine 222 carries the N6-(pyridoxal phosphate)lysine modification.

This sequence belongs to the class-II pyridoxal-phosphate-dependent aminotransferase family. Histidinol-phosphate aminotransferase subfamily. As to quaternary structure, homodimer. It depends on pyridoxal 5'-phosphate as a cofactor.

It catalyses the reaction L-histidinol phosphate + 2-oxoglutarate = 3-(imidazol-4-yl)-2-oxopropyl phosphate + L-glutamate. The protein operates within amino-acid biosynthesis; L-histidine biosynthesis; L-histidine from 5-phospho-alpha-D-ribose 1-diphosphate: step 7/9. This is Histidinol-phosphate aminotransferase from Leuconostoc citreum (strain KM20).